A 597-amino-acid chain; its full sequence is Arginine--tRNA ligase (597 aa).

Positions 125–135 (PNTNKPLHLGH) match the 'HIGH' region motif.

This sequence belongs to the class-I aminoacyl-tRNA synthetase family. Monomer.

It is found in the cytoplasm. It carries out the reaction tRNA(Arg) + L-arginine + ATP = L-arginyl-tRNA(Arg) + AMP + diphosphate. This chain is Arginine--tRNA ligase, found in Bacteroides fragilis (strain YCH46).